The following is a 162-amino-acid chain: Transcription elongation factor GreA (162 aa).

A coiled-coil region spans residues 45–74 (ENAEYEAAREKQAFIEGRIKELEDMTARAE).

This sequence belongs to the GreA/GreB family.

Functionally, necessary for efficient RNA polymerase transcription elongation past template-encoded arresting sites. The arresting sites in DNA have the property of trapping a certain fraction of elongating RNA polymerases that pass through, resulting in locked ternary complexes. Cleavage of the nascent transcript by cleavage factors such as GreA or GreB allows the resumption of elongation from the new 3'terminus. GreA releases sequences of 2 to 3 nucleotides. The polypeptide is Transcription elongation factor GreA (Rickettsia prowazekii (strain Madrid E)).